Consider the following 170-residue polypeptide: MKTQRDGHSLGRWSLVLLLLGLVMPLAIVAQVLSYKEAVLRAIDGINQRSSDANLYRLLDLDPRPTMDGDPDTPKPVSFTVKETVCPRTTQQSPEDCDFKKDGLVKRCMGTVTLNQARGSFDISCDKDNKRFALLGDFFRKSKEKIGKEFKRIVQRIKDFLRNLVPRTES.

A signal peptide spans M1–A30. Residues Q31–R131 constitute a propeptide, cathelin-like domain (CLD). Disulfide bonds link C86/C97 and C108/C125. The segment at F150–R162 is active core.

The protein belongs to the cathelicidin family. Monomer, homodimer or homotrimer (in vitro). Oligomerizes as tetra- or hexamer in solution (in vitro). Post-translationally, proteolytically cleaved by proteinase PRTN3 into antibacterial peptide LL-37. Proteolytically cleaved by cathepsin CTSG and neutrophil elastase ELANE. In terms of processing, resistant to proteolytic degradation in solution, and when bound to both zwitterionic (mimicking mammalian membranes) and negatively charged membranes (mimicking bacterial membranes). After secretion onto the skin surface, the CAMP gene product is processed by a serine protease-dependent mechanism into multiple novel antimicrobial peptides distinct from and shorter than cathelicidin LL-37. These peptides show enhanced antimicrobial action, acquiring the ability to kill skin pathogens such as S.aureus, E.coli and C.albicans. These peptides have lost the ability to stimulate CXCL8/IL8 release from keratinocytes. The peptides act synergistically, killing bacteria at lower concentrations when present together, and maintain activity at increased salt condition.

It is found in the secreted. Its subcellular location is the vesicle. Its function is as follows. Antimicrobial protein that is an integral component of the innate immune system. Binds to bacterial lipopolysaccharides (LPS). Acts via neutrophil N-formyl peptide receptors to enhance the release of CXCL2. Postsecretory processing generates multiple cathelicidin antimicrobial peptides with various lengths which act as a topical antimicrobial defense in sweat on skin. The unprocessed precursor form, cathelicidin antimicrobial peptide, inhibits the growth of Gram-negative E.coli and E.aerogenes with efficiencies comparable to that of the mature peptide LL-37 (in vitro). Functionally, antimicrobial peptide that is an integral component of the innate immune system. Binds to bacterial lipopolysaccharides (LPS). Causes membrane permeabilization by forming transmembrane pores (in vitro). Causes lysis of E.coli. Exhibits antimicrobial activity against Gram-negative bacteria such as P.aeruginosa, S.typhimurium, E.aerogenes, E.coli and P.syringae, Gram-positive bacteria such as L.monocytogenes, S.epidermidis, S.pyogenes and S.aureus, as well as vancomycin-resistant enterococci (in vitro). Exhibits antimicrobial activity against methicillin-resistant S.aureus, P.mirabilis, and C.albicans in low-salt media, but not in media containing 100 mM NaCl (in vitro). Forms chiral supramolecular assemblies with quinolone signal (PQS) molecules of P.aeruginosa, which may lead to interference of bacterial quorum signaling and perturbance of bacterial biofilm formation. May form supramolecular fiber-like assemblies on bacterial membranes. Induces cytokine and chemokine producation as well as TNF/TNFA and CSF2/GMCSF production in normal human keratinocytes. Exhibits hemolytic activity against red blood cells. Exhibits antimicrobial activity against E.coli and B.megaterium (in vitro). In Pan troglodytes (Chimpanzee), this protein is Cathelicidin antimicrobial peptide.